A 644-amino-acid chain; its full sequence is Prolyl 3,4-dihydroxylase TPA1 (644 aa).

The Fe2OG dioxygenase domain occupies 141 to 247 (SKTDMSINTY…RLSIQGWYHI (107 aa)). The Fe cation site is built by H159 and D161. Y173 serves as a coordination point for 2-oxoglutarate. Position 227 (H227) interacts with Fe cation. Position 238 (R238) interacts with 2-oxoglutarate. S607 carries the post-translational modification Phosphoserine.

This sequence belongs to the TPA1 family. In terms of assembly, monomer and homodimer. Interacts with FRK1, eRF1 (SUP1), eRF3 (SUP35) and polyadenylate-binding protein PAB1. Interacts with ETT1. The cofactor is Fe(2+). L-ascorbate is required as a cofactor.

The protein resides in the nucleus. The catalysed reaction is [ribosomal protein uS12]-L-proline + 2-oxoglutarate + O2 = [ribosomal protein uS12]-(3S)-3-hydroxy-L-proline + succinate + CO2. The enzyme catalyses [ribosomal protein uS12]-(3S)-3-hydroxy-L-proline + 2-oxoglutarate + O2 = [ribosomal protein uS12]-(3S)-3,4-dihydroxy-L-proline + succinate + CO2. Its function is as follows. Prolyl 3,4-dihydroxylase that catalyzes 3,4-dihydroxylation of 'Pro-64' of small ribosomal subunit uS12 (RPS23A and RPS23B), thereby regulating protein translation termination efficiency. Part of a messenger ribonucleoprotein (mRNP) complex at the 3'-UTR of mRNAs. It associates specifically with components of the translation termination complex and is involved in both translation termination and in regulation of normal mRNA decay through translation termination-coupled poly(A) shortening. The protein is Prolyl 3,4-dihydroxylase TPA1 of Saccharomyces cerevisiae (strain ATCC 204508 / S288c) (Baker's yeast).